We begin with the raw amino-acid sequence, 472 residues long: Protein hedgehog (472 aa).

Cysteine 84 is lipidated: N-palmitoyl cysteine. Residues glutamate 149, aspartate 154, glutamate 185, aspartate 188, and aspartate 190 each contribute to the Ca(2+) site. The Cholesterol glycine ester moiety is linked to residue glycine 256.

This sequence belongs to the hedgehog family. In terms of assembly, interacts with shf. Post-translationally, the C-terminal part of the hedgehog protein precursor displays an autoproteolysis activity that results in the cleavage of the full-length protein into two parts (N-product and C-product). In addition, the C-terminal part displays a cholesterol transferase activity that results by the covalent attachment of a cholesterol moiety to the C-terminal of the newly generated N-product. The N-product is the active species in both local and long-range signaling, whereas the C-product has no signaling activity. In terms of processing, cholesterylation is required for N-product targeting to lipid rafts and multimerization. N-palmitoylation by Rasp of the hedgehog N-product, within the secretory pathway, is required for the embryonic and larval patterning activities of the hedgehog signal.

It localises to the nucleus. The protein resides in the cytoplasm. Its subcellular location is the cell membrane. It catalyses the reaction glycyl-L-cysteinyl-[protein] + cholesterol + H(+) = [protein]-C-terminal glycyl cholesterol ester + N-terminal L-cysteinyl-[protein]. In terms of biological role, the C-terminal part of the hedgehog protein precursor displays an autoproteolysis activity that results in the cleavage of the full-length protein into two parts (N-product and C-product). In addition, the C-terminal part displays a cholesterol transferase activity that results by the covalent attachment of a cholesterol moiety to the C-terminal of the newly generated N-product. Once cleaved, the C-product has no signaling activity and diffuses from the cell. The dually lipidated hedgehog protein N-product is a morphogen which is essential for a variety of patterning events during development. Establishes the anterior-posterior axis of the embryonic segments and patterns the larval imaginal disks. Binds to the patched (ptc) receptor, which functions in association with smoothened (smo), to activate the transcription of target genes wingless (wg), decapentaplegic (dpp) and ptc. In the absence of hh, ptc represses the constitutive signaling activity of smo through fused (fu). Essential component of a signaling pathway which regulates the Duox-dependent gut immune response to bacterial uracil; required to activate Cad99C-dependent endosome formation, norpA-dependent Ca2+ mobilization and p38 MAPK, which are essential steps in the Duox-dependent production of reactive oxygen species (ROS) in response to intestinal bacterial infection. During photoreceptor differentiation, it up-regulates transcription of Ubr3, which in turn promotes the hh-signaling pathway by mediating the ubiquitination and degradation of cos. In Drosophila ananassae (Fruit fly), this protein is Protein hedgehog.